A 172-amino-acid chain; its full sequence is 3-phenylpropionate/cinnamic acid dioxygenase subunit beta (172 aa).

The protein belongs to the bacterial ring-hydroxylating dioxygenase beta subunit family. This dioxygenase system consists of four proteins: the two subunits of the hydroxylase component (HcaE and HcaF), a ferredoxin (HcaC) and a ferredoxin reductase (HcaD).

It catalyses the reaction 3-phenylpropanoate + NADH + O2 + H(+) = 3-(cis-5,6-dihydroxycyclohexa-1,3-dien-1-yl)propanoate + NAD(+). The enzyme catalyses (E)-cinnamate + NADH + O2 + H(+) = (2E)-3-(cis-5,6-dihydroxycyclohexa-1,3-dien-1-yl)prop-2-enoate + NAD(+). It functions in the pathway aromatic compound metabolism; 3-phenylpropanoate degradation. In terms of biological role, part of the multicomponent 3-phenylpropionate dioxygenase. Converts 3-phenylpropionic acid (PP) and cinnamic acid (CI) into 3-phenylpropionate-dihydrodiol (PP-dihydrodiol) and cinnamic acid-dihydrodiol (CI-dihydrodiol), respectively. The chain is 3-phenylpropionate/cinnamic acid dioxygenase subunit beta from Escherichia coli O157:H7.